The chain runs to 477 residues: Probable cytosolic Fe-S cluster assembly factor CG17683 (477 aa).

[4Fe-4S] cluster is bound by residues Cys23, Cys68, Cys71, Cys74, Cys187, Cys243, Cys395, and Cys399.

It belongs to the NARF family.

In terms of biological role, component of the cytosolic iron-sulfur (Fe/S) protein assembly machinery. Required for maturation of extramitochondrial Fe/S proteins. The protein is Probable cytosolic Fe-S cluster assembly factor CG17683 of Drosophila melanogaster (Fruit fly).